Here is a 950-residue protein sequence, read N- to C-terminus: Leucine--tRNA ligase (950 aa).

A 'HIGH' region motif is present at residues 72–83 (PYPSGEGLHVGH). Residues 722-726 (KIGKS) carry the 'KMSKS' region motif. K725 contributes to the ATP binding site.

Belongs to the class-I aminoacyl-tRNA synthetase family.

It localises to the cytoplasm. The enzyme catalyses tRNA(Leu) + L-leucine + ATP = L-leucyl-tRNA(Leu) + AMP + diphosphate. The protein is Leucine--tRNA ligase of Mycobacterium sp. (strain JLS).